A 153-amino-acid polypeptide reads, in one-letter code: MKKRQYLKSLYVALLGTLCYLSVNAQSQLFTPEQMSKIENKLIGEHKFALQWISWDKFGTAEISRDATGLVIKGEQELDGNSVSLFGRIKVIDESAFLFTGEIVTIVYHVNKGKACTRHGTYEFRATDKRKYWRLQQMDSPCDSVVDYIDIFF.

A signal peptide spans 1 to 25 (MKKRQYLKSLYVALLGTLCYLSVNA).

This is an uncharacterized protein from Pasteurella multocida (strain Pm70).